A 150-amino-acid chain; its full sequence is 1,4-dihydroxy-2-naphthoyl-CoA hydrolase (150 aa).

Residue aspartate 19 is part of the active site.

The protein belongs to the 4-hydroxybenzoyl-CoA thioesterase family. DHNA-CoA hydrolase subfamily.

The catalysed reaction is 1,4-dihydroxy-2-naphthoyl-CoA + H2O = 1,4-dihydroxy-2-naphthoate + CoA + H(+). Its pathway is cofactor biosynthesis; phylloquinone biosynthesis. It participates in quinol/quinone metabolism; 1,4-dihydroxy-2-naphthoate biosynthesis; 1,4-dihydroxy-2-naphthoate from chorismate: step 7/7. Catalyzes the hydrolysis of 1,4-dihydroxy-2-naphthoyl-CoA (DHNA-CoA) to 1,4-dihydroxy-2-naphthoate (DHNA), a reaction involved in phylloquinone (vitamin K1) biosynthesis. The sequence is that of 1,4-dihydroxy-2-naphthoyl-CoA hydrolase from Prochlorococcus marinus (strain MIT 9312).